An 87-amino-acid chain; its full sequence is Small ribosomal subunit protein bS20 (87 aa).

Positions Met1 to Met27 are disordered.

Belongs to the bacterial ribosomal protein bS20 family.

Functionally, binds directly to 16S ribosomal RNA. This chain is Small ribosomal subunit protein bS20, found in Pectobacterium carotovorum subsp. carotovorum (strain PC1).